The primary structure comprises 165 residues: S-(2-succino)cysteine N-acetyltransferase (165 aa).

The N-acetyltransferase domain occupies 3–162 (PRYRLAVERD…ITVYMKKQLR (160 aa)).

Belongs to the acetyltransferase family.

It catalyses the reaction S-(2-succino)-L-cysteine + acetyl-CoA = N-acetyl-S-(2-succino)-L-cysteine + CoA + H(+). It participates in amino-acid biosynthesis; L-cysteine biosynthesis. In terms of biological role, catalyzes the N-acetylation of S-(2-succino)cysteine. Is involved in a S-(2-succino)cysteine (2SC) degradation pathway that allows B.subtilis to grow on 2SC as a sole sulfur source, via its metabolization to cysteine. Moreover, 2SC is a toxic compound in B.subtilis at high exogenous concentrations, and this enzyme relieves 2SC toxicity via N-acetylation. The sequence is that of S-(2-succino)cysteine N-acetyltransferase from Bacillus subtilis (strain 168).